The primary structure comprises 442 residues: 3-dehydroquinate synthase, chloroplastic (442 aa).

The transit peptide at 1–58 directs the protein to the chloroplast; that stretch reads MAANTISLSNVAASKNLNSFQSRAFIAPPTIFFPVASAKSKPGELSLSSTTLSRSRVR. Ala59 is modified (N-acetylalanine). NAD(+) is bound by residues Asn119, 150-152, Lys155, 183-188, 208-209, Lys221, Lys230, and 248-251; these read DGE, GGVIGD, TT, and TLNT. Glu263 contacts a divalent metal cation. An NAD(+)-binding site is contributed by Lys305. Positions 326 and 343 each coordinate a divalent metal cation.

Belongs to the sugar phosphate cyclases superfamily. Dehydroquinate synthase family. In terms of assembly, homodimer. The cofactor is a divalent metal cation. It depends on NAD(+) as a cofactor.

It is found in the plastid. Its subcellular location is the chloroplast. It carries out the reaction 7-phospho-2-dehydro-3-deoxy-D-arabino-heptonate = 3-dehydroquinate + phosphate. Its pathway is metabolic intermediate biosynthesis; chorismate biosynthesis; chorismate from D-erythrose 4-phosphate and phosphoenolpyruvate: step 2/7. Functionally, catalyzes the second step in the shikimate pathway. The protein is 3-dehydroquinate synthase, chloroplastic (DHQS) of Arabidopsis thaliana (Mouse-ear cress).